Here is a 1186-residue protein sequence, read N- to C-terminus: MYND-type zinc finger-containing chromatin reader ZMYND8 (1186 aa).

The span at 1-12 (MDISTRSKDPGS) shows a compositional bias: basic and acidic residues. Residues 1-57 (MDISTRSKDPGSAERTAQKRKFPSPPHSSNGHSPQDTSTSPIKKKKKPGLLNSNNKE) are disordered. The tract at residues 1–850 (MDISTRSKDP…QQQQQQQNQQ (850 aa)) is required for interaction with CCNT1. Residue S12 forms a Glycyl lysine isopeptide (Lys-Gly) (interchain with G-Cter in SUMO2) linkage. S24 carries the phosphoserine modification. Residues K56 and K70 each participate in a glycyl lysine isopeptide (Lys-Gly) (interchain with G-Cter in SUMO2) cross-link. An interaction with histone H3K4me0 region spans residues 75 to 268 (TDPVDVVPQD…YLAACQKRDN (194 aa)). An interaction with histone H3K14ac region spans residues 75–406 (TDPVDVVPQD…VKLNFDMTAS (332 aa)). The PHD-type zinc-finger motif lies at 88-133 (DFYCWVCHREGQVLCCELCPRVYHAKCLRLTSEPEGDWFCPECEKI). A required for interaction with histone H3 and histone H4 region spans residues 88–327 (DFYCWVCHRE…INNCYLMSKE (240 aa)). Zn(2+) contacts are provided by C91, C94, C103, C106, H111, C114, C127, and C130. The 108-residue stretch at 145-252 (AMTMLTIEQL…KICEHEMNEI (108 aa)) folds into the Bromo domain. Zn(2+)-binding residues include C255, C258, and C274. The PWWP domain maps to 277 to 327 (PHPLVWAKLKGFPFWPAKALRDKDGQVDARFFGQHDRAWVPINNCYLMSKE). A Glycyl lysine isopeptide (Lys-Gly) (interchain with G-Cter in SUMO2) cross-link involves residue K390. T404 is modified (phosphothreonine). S406 bears the Phosphoserine mark. The segment at 412-512 (SKPVLSGGTG…TTKTDKTSTT (101 aa)) is disordered. Position 413 is an N6-acetyllysine; alternate (K413). K413 participates in a covalent cross-link: Glycyl lysine isopeptide (Lys-Gly) (interchain with G-Cter in SUMO2); alternate. Phosphoserine occurs at positions 417, 425, and 432. Positions 433 to 442 (PMSTNSSVHT) are enriched in polar residues. Phosphoserine is present on S444. K453 participates in a covalent cross-link: Glycyl lysine isopeptide (Lys-Gly) (interchain with G-Cter in SUMO2). Residues S460, S462, S465, S486, S490, and S495 each carry the phosphoserine modification. The segment covering 472–489 (STASPASTKTGQAGSLSG) has biased composition (polar residues). K505 participates in a covalent cross-link: Glycyl lysine isopeptide (Lys-Gly) (interchain with G-Cter in SUMO2). 2 positions are modified to phosphoserine: S514 and S523. Residue K530 forms a Glycyl lysine isopeptide (Lys-Gly) (interchain with G-Cter in SUMO2) linkage. T541 carries the post-translational modification Phosphothreonine. Position 547 is a phosphoserine (S547). K549 is covalently cross-linked (Glycyl lysine isopeptide (Lys-Gly) (interchain with G-Cter in SUMO2)). T563 bears the Phosphothreonine mark. The interval 582 to 884 (TAVEHSDSED…ITQSPSTSTI (303 aa)) is disordered. 2 stretches are compositionally biased toward basic and acidic residues: residues 585–597 (EHSDSEDSEKSDS) and 606–631 (DEQKSKNEPEDTEDKEGCQMDKEPSA). Residues K611 and K645 each participate in a glycyl lysine isopeptide (Lys-Gly) (interchain with G-Cter in SUMO2) cross-link. Phosphoserine occurs at positions 652 and 655. The span at 656–696 (EKADPGAVKDKASPEPEKDFSEKAKPSPHPIKDKLKGKDET) shows a compositional bias: basic and acidic residues. A Glycyl lysine isopeptide (Lys-Gly) (interchain with G-Cter in SUMO2) cross-link involves residue K657. 5 positions are modified to phosphoserine: S668, S682, S707, S709, and S737. Over residues 718–738 (GEDHSGREGRKNKKEPKEPSP) the composition is skewed to basic and acidic residues. The residue at position 746 (T746) is a Phosphothreonine. S754 and S756 each carry phosphoserine. A compositionally biased stretch (low complexity) spans 766–799 (SSAQTSAAGATATTSTSSTVTVTAPAPAATGSPV). The span at 818–832 (VWNSSSKFQTSSQKW) shows a compositional bias: polar residues. The span at 835-857 (QKMQRQQQQQQQQNQQQQPQSSQ) shows a compositional bias: low complexity. Positions 873–884 (KEITQSPSTSTI) are enriched in polar residues. Residues 875–1047 (ITQSPSTSTI…YCCWNTSYCD (173 aa)) are required for homodimerization. 8 residues coordinate Zn(2+): C1028, C1031, C1039, C1040, C1046, C1050, H1058, and C1062. The MYND-type zinc-finger motif lies at 1028 to 1062 (CANCKKEAIFYCCWNTSYCDYPCQQAHWPEHMKSC). Positions 1028 to 1062 (CANCKKEAIFYCCWNTSYCDYPCQQAHWPEHMKSC) are required for recruitment to DNA damage sites and for interaction with the NuRD complex, CHD4, HDAC1, HDAC2 and KDM1A. The segment at 1071–1186 (QEADAEVNTE…KESRLDTFWD (116 aa)) is disordered. Positions 1085–1103 (SSQGSSSSTQSAPSETASA) are enriched in low complexity. The span at 1104–1116 (SKEKETSAEKSKE) shows a compositional bias: basic and acidic residues. K1115 is covalently cross-linked (Glycyl lysine isopeptide (Lys-Gly) (interchain with G-Cter in SUMO2)). Position 1119 is a phosphoserine (S1119). The segment covering 1121 to 1140 (LDLSGSRETPSSILLGSNQG) has biased composition (polar residues). Position 1141 is a phosphoserine (S1141). An interaction with PRKCB1 region spans residues 1147 to 1186 (NKSSWSSSDEKRGSTRSDHNTSTSTKSLLPKESRLDTFWD). Basic and acidic residues-rich tracts occupy residues 1154-1165 (SDEKRGSTRSDH) and 1175-1186 (LPKESRLDTFWD).

In terms of assembly, monomer and homodimer. Interacts with NuRD subcomplexes containing GATAD2A. Interacts with the histone deacetylase NuRD complex subunit CHD4; the interaction is direct, appears to occur with monomeric ZMYND8, and is increased following DNA damage. Interacts (via N-terminus) with the P-TEFb complex subunit CCNT1 (via central region); the interaction is direct and the association appears to occur between homodimeric ZMYND8 and the activated form of the P-TEFb complex. Interacts (via N-terminus) with DBN1 (via ADF-H domain); the interaction leads to sequestering of ZMYND8 in the cytoplasm. Interacts with the P-TEFb complex subunit CDK9; the association appears to occur between homodimeric ZMYND8 and the activated form of the P-TEFb complex. Interacts with EZH2; the interaction is dependent on the presence of chromatin. Interacts (via MYND domain) with the NuRD complex subunit GATAD2A. Interacts with histone H3 (via N-terminus) that is both methylated at 'Lys-4' (H3K4me1) and acetylated at 'Lys-14' (H3K14ac), with histone H3 (via N-terminus) unmodified at 'Lys-4' (H3K4me0) and acetylated at 'Lys-14' (H3K14ac), and with histone H3 (via N-terminus) di-methylated at 'Lys-36' (H3K36me2). Interacts (via Bromo domain) with histone H4 acetylated at 'Lys-16' (H4K16ac). Interacts with HDAC1. Interacts with HDAC2. Interacts with KDM1A. Interacts with KDM5C. Interacts with KDM5D. Interacts in vitro with PRKCB. Interacts with RNA polymerase II subunit POLR2A phosphorylated at 'Ser-5'. Interacts with ZNF592. Interacts with ZNF687. Does not interact with GATAD2B. Expressed in neurons (at protein level). Absent in astrocytes (at protein level). Expressed in all tissues examined with highest expression in brain, lung, pancreas, and placenta. Expressed in cutaneous T-cell lymphomas (CTCL).

The protein resides in the nucleus. The protein localises to the chromosome. It localises to the cytoplasm. Chromatin reader that recognizes dual histone modifications such as histone H3.1 dimethylated at 'Lys-36' and histone H4 acetylated at 'Lys-16' (H3.1K36me2-H4K16ac) and histone H3 methylated at 'Lys-4' and histone H4 acetylated at 'Lys-14' (H3K4me1-H3K14ac). May act as a transcriptional corepressor for KDM5D by recognizing the dual histone signature H3K4me1-H3K14ac. May also act as a transcriptional corepressor for KDM5C and EZH2. Recognizes acetylated histone H4 and recruits the NuRD chromatin remodeling complex to damaged chromatin for transcriptional repression and double-strand break repair by homologous recombination. Also activates transcription elongation by RNA polymerase II through recruiting the P-TEFb complex to target promoters. Localizes to H3.1K36me2-H4K16ac marks at all-trans-retinoic acid (ATRA)-responsive genes and positively regulates their expression. Promotes neuronal differentiation by associating with regulatory regions within the MAPT gene, to enhance transcription of a protein-coding MAPT isoform and suppress the non-coding MAPT213 isoform. Suppresses breast cancer, and prostate cancer cell invasion and metastasis. The chain is MYND-type zinc finger-containing chromatin reader ZMYND8 (ZMYND8) from Homo sapiens (Human).